The chain runs to 442 residues: DNA N(6)-methyladenine demethylase ALKBH1D (442 aa).

The span at 135–144 (SMVHFDSTNP) shows a compositional bias: polar residues. Residues 135 to 185 (SMVHFDSTNPSSSSKSSQSQNLKIRKVRNHRNSGFKSRDQSPQRIKDPPPF) are disordered. The span at 145–154 (SSSSKSSQSQ) shows a compositional bias: low complexity. The segment covering 157–167 (KIRKVRNHRNS) has biased composition (basic residues). Basic and acidic residues predominate over residues 170 to 183 (KSRDQSPQRIKDPP). One can recognise a Fe2OG dioxygenase domain in the interval 332–442 (SPDICIVNFY…GRLNLTFRHF (111 aa)). Residue 339–341 (NFY) coordinates 2-oxoglutarate. Residues H350, D352, and H410 each contribute to the Fe cation site. 434 to 440 (RLNLTFR) lines the 2-oxoglutarate pocket.

The protein belongs to the alkB family. Fe(2+) serves as cofactor. In terms of tissue distribution, expressed at low levels in roots, seedlings and rosette leaves, but barely in cauline leaves, stems, siliques and flowers.

It is found in the nucleus. The protein resides in the cytoplasm. It carries out the reaction an N(6)-methyl-2'-deoxyadenosine in DNA + 2-oxoglutarate + O2 = a 2'-deoxyadenosine in DNA + formaldehyde + succinate + CO2. Dioxygenase that catalyzes DNA N(6)-methyladenine (6 mA) demethylation to modulate gene expression and regulate seed germination. The polypeptide is DNA N(6)-methyladenine demethylase ALKBH1D (Arabidopsis thaliana (Mouse-ear cress)).